The following is a 239-amino-acid chain: 4-hydroxy-tetrahydrodipicolinate reductase (239 aa).

NAD(+) is bound by residues 12 to 17 (GASGRM), 94 to 96 (GTT), and 118 to 121 (ASNF). H150 acts as the Proton donor/acceptor in catalysis. H151 provides a ligand contact to (S)-2,3,4,5-tetrahydrodipicolinate. K154 (proton donor) is an active-site residue. Residue 160-161 (GT) coordinates (S)-2,3,4,5-tetrahydrodipicolinate.

This sequence belongs to the DapB family.

Its subcellular location is the cytoplasm. It catalyses the reaction (S)-2,3,4,5-tetrahydrodipicolinate + NAD(+) + H2O = (2S,4S)-4-hydroxy-2,3,4,5-tetrahydrodipicolinate + NADH + H(+). The enzyme catalyses (S)-2,3,4,5-tetrahydrodipicolinate + NADP(+) + H2O = (2S,4S)-4-hydroxy-2,3,4,5-tetrahydrodipicolinate + NADPH + H(+). The protein operates within amino-acid biosynthesis; L-lysine biosynthesis via DAP pathway; (S)-tetrahydrodipicolinate from L-aspartate: step 4/4. Its function is as follows. Catalyzes the conversion of 4-hydroxy-tetrahydrodipicolinate (HTPA) to tetrahydrodipicolinate. This Stenotrophomonas maltophilia (strain K279a) protein is 4-hydroxy-tetrahydrodipicolinate reductase.